Consider the following 320-residue polypeptide: Methionyl-tRNA formyltransferase (320 aa).

111 to 114 (SLLP) serves as a coordination point for (6S)-5,6,7,8-tetrahydrofolate.

Belongs to the Fmt family.

It carries out the reaction L-methionyl-tRNA(fMet) + (6R)-10-formyltetrahydrofolate = N-formyl-L-methionyl-tRNA(fMet) + (6S)-5,6,7,8-tetrahydrofolate + H(+). Its function is as follows. Attaches a formyl group to the free amino group of methionyl-tRNA(fMet). The formyl group appears to play a dual role in the initiator identity of N-formylmethionyl-tRNA by promoting its recognition by IF2 and preventing the misappropriation of this tRNA by the elongation apparatus. The chain is Methionyl-tRNA formyltransferase from Methylacidiphilum infernorum (isolate V4) (Methylokorus infernorum (strain V4)).